Consider the following 1399-residue polypeptide: DNA-directed RNA polymerase subunit beta' (1399 aa).

Cysteine 70, cysteine 72, cysteine 85, and cysteine 88 together coordinate Zn(2+). Residues aspartate 460, aspartate 462, and aspartate 464 each coordinate Mg(2+). Residues cysteine 814, cysteine 888, cysteine 895, and cysteine 898 each coordinate Zn(2+).

This sequence belongs to the RNA polymerase beta' chain family. As to quaternary structure, the RNAP catalytic core consists of 2 alpha, 1 beta, 1 beta' and 1 omega subunit. When a sigma factor is associated with the core the holoenzyme is formed, which can initiate transcription. Mg(2+) serves as cofactor. Requires Zn(2+) as cofactor.

The catalysed reaction is RNA(n) + a ribonucleoside 5'-triphosphate = RNA(n+1) + diphosphate. Functionally, DNA-dependent RNA polymerase catalyzes the transcription of DNA into RNA using the four ribonucleoside triphosphates as substrates. The polypeptide is DNA-directed RNA polymerase subunit beta' (Pseudomonas fluorescens (strain ATCC BAA-477 / NRRL B-23932 / Pf-5)).